A 726-amino-acid chain; its full sequence is Methyltransferase FGSG_00040 (726 aa).

TPR repeat units lie at residues Ser187–Val220, Gln224–Ser257, and Glu258–Asn291. An SET domain is found at Ala336–Arg531. Tyr530 provides a ligand contact to S-adenosyl-L-methionine.

It belongs to the class V-like SAM-binding methyltransferase superfamily.

Its pathway is mycotoxin biosynthesis. In terms of biological role, methyltransferase; part of the gene cluster that mediates the biosynthesis of gramillins A and B, bicyclic lipopeptides that induce cell death in maize leaves but not in wheat leaves. The nonribosomal peptide synthetase GRA1 incorporates respectively a glutamic adic (Glu), a leucine (Leu), a serine (Ser), a hydroxyglutamine (HOGln), a 2-amino decanoic acid, and 2 cysteins (CysB and CysA). The biosynthesis of 2-amino decanoic acid incorporated in gramillins could be initiated by a fatty acid synthase composed of the alpha and beta subunits FGSG_00036 and FGSG_11656. The cytochrome P450 monooxygenase FGSG_15680 could hydroxylate the fatty acid chain. Subsequent oxidation to the ketone by the oxidoreductase FGSG_00048 and transamination by aminotransferase FGSG_00049 could form 2-amino-decanoic acid. On the other hand, FGSG_15680 could also be responsible for the HO-modified glutamine at the gamma-position. Whether hydroxylation occurs on the fully assembled product or on the Gln residue prior to assembly into the gramillins requires further proof. The thioredoxin FGSG_00043 could also be required for the disulfide-bond formation between CysA and CysB. The specific involvement of the remaining proteins from the cluster is more difficult to discern, but could have broader regulatory (FGSG_00040 and FGSG_11657) or enzymatic functions (FGSG_00044 and FGSG_00045). The final C-domain of GRA1 does not possess the expected sequence of a termination CT domain, often implicated in macrocyclization and release of a cyclopeptidein fungal NRPs; and the thioesterase FGSG_00047 may act in concert with the terminal C-domain of GRA1 to catalyze the formation of the macrocyclic anhydride and release of the products. The chain is Methyltransferase FGSG_00040 from Gibberella zeae (strain ATCC MYA-4620 / CBS 123657 / FGSC 9075 / NRRL 31084 / PH-1) (Wheat head blight fungus).